A 92-amino-acid chain; its full sequence is Small ribosomal subunit protein uS19 (92 aa).

Belongs to the universal ribosomal protein uS19 family.

Its function is as follows. Protein S19 forms a complex with S13 that binds strongly to the 16S ribosomal RNA. The sequence is that of Small ribosomal subunit protein uS19 from Shigella boydii serotype 18 (strain CDC 3083-94 / BS512).